The chain runs to 402 residues: Tol-Pal system protein TolB (402 aa).

The first 17 residues, 1 to 17 (MKKIVAIFLVFLGSLWA), serve as a signal peptide directing secretion.

The protein belongs to the TolB family. As to quaternary structure, the Tol-Pal system is composed of five core proteins: the inner membrane proteins TolA, TolQ and TolR, the periplasmic protein TolB and the outer membrane protein Pal. They form a network linking the inner and outer membranes and the peptidoglycan layer.

The protein localises to the periplasm. Functionally, part of the Tol-Pal system, which plays a role in outer membrane invagination during cell division and is important for maintaining outer membrane integrity. The chain is Tol-Pal system protein TolB from Campylobacter jejuni (strain RM1221).